Here is a 493-residue protein sequence, read N- to C-terminus: Ketol-acid reductoisomerase (NADP(+)) (493 aa).

Positions 14–208 (LDQLGRCRFM…GGHRAGVLES (195 aa)) constitute a KARI N-terminal Rossmann domain. NADP(+)-binding positions include 45–48 (CGAQ), arginine 68, arginine 76, serine 78, and 108–110 (DKQ). Residue histidine 132 is part of the active site. Glycine 158 is an NADP(+) binding site. 2 KARI C-terminal knotted domains span residues 209–345 (SFVA…APKG) and 346–486 (ENIK…MTDM). 4 residues coordinate Mg(2+): aspartate 217, glutamate 221, glutamate 390, and glutamate 394. A substrate-binding site is contributed by serine 415.

Belongs to the ketol-acid reductoisomerase family. The cofactor is Mg(2+).

The enzyme catalyses (2R)-2,3-dihydroxy-3-methylbutanoate + NADP(+) = (2S)-2-acetolactate + NADPH + H(+). It carries out the reaction (2R,3R)-2,3-dihydroxy-3-methylpentanoate + NADP(+) = (S)-2-ethyl-2-hydroxy-3-oxobutanoate + NADPH + H(+). It participates in amino-acid biosynthesis; L-isoleucine biosynthesis; L-isoleucine from 2-oxobutanoate: step 2/4. The protein operates within amino-acid biosynthesis; L-valine biosynthesis; L-valine from pyruvate: step 2/4. Its function is as follows. Involved in the biosynthesis of branched-chain amino acids (BCAA). Catalyzes an alkyl-migration followed by a ketol-acid reduction of (S)-2-acetolactate (S2AL) to yield (R)-2,3-dihydroxy-isovalerate. In the isomerase reaction, S2AL is rearranged via a Mg-dependent methyl migration to produce 3-hydroxy-3-methyl-2-ketobutyrate (HMKB). In the reductase reaction, this 2-ketoacid undergoes a metal-dependent reduction by NADPH to yield (R)-2,3-dihydroxy-isovalerate. The chain is Ketol-acid reductoisomerase (NADP(+)) from Histophilus somni (strain 129Pt) (Haemophilus somnus).